The primary structure comprises 367 residues: Phosphoribosylaminoimidazole-succinocarboxamide synthase (367 aa).

Belongs to the SAICAR synthetase family.

The enzyme catalyses 5-amino-1-(5-phospho-D-ribosyl)imidazole-4-carboxylate + L-aspartate + ATP = (2S)-2-[5-amino-1-(5-phospho-beta-D-ribosyl)imidazole-4-carboxamido]succinate + ADP + phosphate + 2 H(+). It participates in purine metabolism; IMP biosynthesis via de novo pathway; 5-amino-1-(5-phospho-D-ribosyl)imidazole-4-carboxamide from 5-amino-1-(5-phospho-D-ribosyl)imidazole-4-carboxylate: step 1/2. In Shewanella sp. (strain MR-4), this protein is Phosphoribosylaminoimidazole-succinocarboxamide synthase.